A 183-amino-acid chain; its full sequence is Abscisic acid receptor PYL10 (183 aa).

Residues 20-172 (HELVESQCSS…NLNSLADVTE (153 aa)) form an START-like region. An intrachain disulfide couples cysteine 27 to cysteine 153. Abscisate-binding positions include lysine 56, 85–90 (ATKSTE), 112–118 (RLKNYSS), and glutamate 137. The short motif at 81–85 (SGLPA) is the Gate loop element. Residues 111–113 (HRL) carry the Latch loop motif.

It belongs to the PYR/PYL/RCAR abscisic acid intracellular receptor family. In terms of assembly, monomer. Forms heterodimer with PYL13, thus antagonizing PP2Cs-binding and ABA-independent inhibition of PP2Cs. Homodimer. Binds ABA on one subunit only. Binds to CARs protein in an ABA-independent manner, both at the plasma membrane and in the nucleus. Interacts with ABI1 and HAB1, and possibly with other PP2Cs, in an ABA-independent manner.

The protein localises to the cytoplasm. It localises to the nucleus. Its subcellular location is the cell membrane. Its function is as follows. Receptor for abscisic acid (ABA) required for ABA-mediated responses such as stomatal closure and germination inhibition. Inhibits the activity of group-A protein phosphatases type 2C (PP2Cs) in an ABA-independent manner but more efficiently when activated by ABA. Can be activated by both (-)-ABA and (+)-ABA. This chain is Abscisic acid receptor PYL10 (PYL10), found in Arabidopsis thaliana (Mouse-ear cress).